Here is a 280-residue protein sequence, read N- to C-terminus: Myelin proteolipid protein A (280 aa).

Topologically, residues 1–10 (MGWHDGCIRC) are cytoplasmic. 2 S-palmitoyl cysteine lipidation sites follow: Cys7 and Cys10. Residues 11–36 (MVGVPFASVIATVLCFAGVALFCGCG) traverse the membrane as a helical segment. Over 37-59 (HEALSGTEKLIETYFSKNYQEYE) the chain is Extracellular. A helical membrane pass occupies residues 60 to 88 (YLIHVINAFQYVIYGIAIFFFLFGILLLA). Residues 89–152 (EGFYTTTAIK…LGKWLGHPDK (64 aa)) are Cytoplasmic-facing. S-palmitoyl cysteine attachment occurs at residues Cys140 and Cys142. A helical transmembrane segment spans residues 153 to 179 (FVGVTYIITILWILIFACSAVPVYIYF). Residues 180–239 (NTWVTCQSIAFPGKTTTSVSTLCSDARMYGVLPWNAFPGKVCGTSLLAICKTSEFQMTFH) are Extracellular-facing. 2 disulfides stabilise this stretch: Cys185–Cys229 and Cys202–Cys221. Residues 240 to 269 (LFIAAFVGAAATLVALLTYMVGASFNYAVL) form a helical membrane-spanning segment. At 270–280 (RVTGRSDRSKF) the chain is on the cytoplasmic side.

The protein belongs to the myelin proteolipid protein family.

The protein localises to the cell membrane. This is the major myelin protein from the central nervous system. It plays an important role in the formation or maintenance of the multilamellar structure of myelin. This is Myelin proteolipid protein A (plp1-a) from Xenopus laevis (African clawed frog).